Reading from the N-terminus, the 315-residue chain is Calumenin (315 aa).

An N-terminal signal peptide occupies residues 1 to 19; the sequence is MDLRQFLMCLSLCTAFALS. Position 44 is a phosphoserine (S44). Y47 is modified (phosphotyrosine). At T65 the chain carries Phosphothreonine. EF-hand domains are found at residues 68–103, 104–139, 151–186, 188–223, 229–264, and 265–300; these read ESKE…AQKR, WIYE…YVLD, QMMV…EEYD, MKDI…HDGN, WVKT…SDYD, and HAEA…FVGS. S69 carries the phosphoserine modification. Ca(2+)-binding residues include D81, D83, D85, E92, D117, N119, D121, and E128. N-linked (GlcNAc...) asparagine glycosylation is present at N131. D164 contributes to the Ca(2+) binding site. K165 bears the N6-acetyllysine mark. Residues D166, D168, E175, D201, N203, D205, E212, D242, N244, D246, K248, and E253 each coordinate Ca(2+). Phosphothreonine is present on T254. Phosphoserine is present on residues S261 and S277. Positions 278, 280, 282, 284, and 289 each coordinate Ca(2+). The short motif at 312–315 is the Prevents secretion from ER element; the sequence is HDEF.

The protein belongs to the CREC family. In terms of assembly, interacts with GGCX.

It localises to the endoplasmic reticulum membrane. Its subcellular location is the golgi apparatus. It is found in the secreted. The protein resides in the melanosome. The protein localises to the sarcoplasmic reticulum lumen. In terms of biological role, involved in regulation of vitamin K-dependent carboxylation of multiple N-terminal glutamate residues. Seems to inhibit gamma-carboxylase GGCX. Binds 7 calcium ions with a low affinity. This Pongo abelii (Sumatran orangutan) protein is Calumenin (CALU).